Reading from the N-terminus, the 238-residue chain is Beta-glucanase (238 aa).

Residues 1–26 form the signal peptide; it reads MMKKKSWFTLMITGVISLFFSVSAFA. The region spanning 29 to 238 is the GH16 domain; that stretch reads VFWEPLSYFN…EYDWVKYTSN (210 aa). The cysteines at positions 56 and 85 are disulfide-linked. Glutamate 129 acts as the Nucleophile in catalysis. Glutamate 133 acts as the Proton donor in catalysis.

Belongs to the glycosyl hydrolase 16 family.

The catalysed reaction is Hydrolysis of (1-&gt;4)-beta-D-glucosidic linkages in beta-D-glucans containing (1-&gt;3)- and (1-&gt;4)-bonds.. The polypeptide is Beta-glucanase (gluB) (Paenibacillus polymyxa (Bacillus polymyxa)).